Reading from the N-terminus, the 224-residue chain is MHLHYDLPYPKHDMTDEPVSFFTYPPDSDTKFIPKDPCVHKPLSIKQVMERKLHWITLGGQYDWTNRVYPGERPPEFPRDVAGLLETLFPETLAQAAIVNFYTPGDTMMMHRDVSEETDKGLVSLSMGCDALFMIAPNDVGKMSEEDRPGHGEKEHLLLRIRSGDAIYMTQEARYAWHGVPKVLKGTCPDYLEDWPAEDGKYEEWQGWMKNKRINLNVRQMRDC.

Residues 93–222 enclose the Fe2OG dioxygenase domain; sequence LAQAAIVNFY…RINLNVRQMR (130 aa). Positions 111, 113, and 178 each coordinate Fe cation. Residue Arg-213 participates in 2-oxoglutarate binding.

It belongs to the alkB family. Requires Fe(2+) as cofactor.

It carries out the reaction an N(6)-methyladenosine in mRNA + 2-oxoglutarate + O2 = an adenosine in mRNA + formaldehyde + succinate + CO2. RNA demethylase that regulates the stability of mRNAs through an m(6)A-dependent manner. M6A is a modification present at internal sites of mRNAs and some non-coding RNAs and plays a role in mRNA stability and processing. Demethylate m6A at position A1935 within the 3'UTR of transcription factor ZAP1 and plays an important role in C.parasitica development and virulence. Target mRNAs are primarily associated with amino-acid biosynthesis, 2-oxocarboxylic acid metabolism, and ABC transporters, as well as alpha-amino acid metabolism, small-molecule biosynthesis, and the sulfite reductase complex (NADPH). In Cryphonectria parasitica (strain ATCC 38755 / EP155), this protein is N6-methyladenosine RNA demethylase ALKBH.